The sequence spans 98 residues: Putative protein adenylyltransferase MJ1217 (98 aa).

The GSX(10)DXD motif motif lies at 31 to 45 (GSYAREEQKETSDID). Mg(2+) is bound by residues D43, D45, and D75.

Belongs to the MntA antitoxin family. Probably forms a complex with cognate toxin MJ1216. It depends on Mg(2+) as a cofactor.

The catalysed reaction is L-tyrosyl-[protein] + ATP = O-(5'-adenylyl)-L-tyrosyl-[protein] + diphosphate. It carries out the reaction O-(5'-adenylyl)-L-tyrosyl-[protein] + ATP = O-[5'-(adenylyl-(5'-&gt;3')-adenylyl)]-L-tyrosyl-[protein] + diphosphate. Its function is as follows. Probable antitoxin component of a putative type VII toxin-antitoxin (TA) system. Neutralizes cognate toxic MJ1216 by di-AMPylation. The protein is Putative protein adenylyltransferase MJ1217 of Methanocaldococcus jannaschii (strain ATCC 43067 / DSM 2661 / JAL-1 / JCM 10045 / NBRC 100440) (Methanococcus jannaschii).